Reading from the N-terminus, the 142-residue chain is Hemoglobin subunit alpha-1 (142 aa).

Ser-1 carries the N-acetylserine modification. The Globin domain occupies 1-142 (SLSDKDKAAV…VALALAERYR (142 aa)). Residue His-59 participates in O2 binding. Position 88 (His-88) interacts with heme b.

It belongs to the globin family. In terms of assembly, hb1 is a heterotetramer of two alpha-1 chains and two beta chains. HbC is a heterotetramer of two alpha-1 chains and two beta-C chains. Red blood cells.

Involved in oxygen transport from gills to the various peripheral tissues. The protein is Hemoglobin subunit alpha-1 (hba1) of Trematomus newnesi (Dusky notothen).